Reading from the N-terminus, the 364-residue chain is Lysophosphatidic acid receptor 1 (364 aa).

At 1–50 (MAAAFTSSPVVSQPQFTAMNEQQCFSNESIAFFYNRSGKYLATEWNTVTK) the chain is on the extracellular side. 2 cysteine pairs are disulfide-bonded: C24–C190 and C188–C195. Residues N27 and N35 are each glycosylated (N-linked (GlcNAc...) asparagine). K39 contacts a 1-acyl-sn-glycero-3-phosphate. A helical transmembrane segment spans residues 51 to 75 (LVMGLGITVCIFIMLANLLVMVAIY). Residues 76–83 (VNRRFHFP) lie on the Cytoplasmic side of the membrane. The chain crosses the membrane as a helical span at residues 84–107 (IYYLMANLAAADFFAGLAYFYLMF). At 108 to 121 (NTGPNTRRLTVSTW) the chain is on the extracellular side. Residues 122–144 (LLRQGLIDTSLTVSVANLLAIAI) traverse the membrane as a helical segment. 124–129 (RQGLID) contacts a 1-acyl-sn-glycero-3-phosphate. Over 145–163 (ERHITVFRMQLHARMSNRR) the chain is Cytoplasmic. The helical transmembrane segment at 164-184 (VVVVIVVIWTMAIVMGAIPSV) threads the bilayer. Residues 185–204 (GWNCICDIENCSNMAPLYSD) lie on the Extracellular side of the membrane. Residues 205 to 225 (SYLVFWAIFNLVTFVVMVVLY) traverse the membrane as a helical segment. W210 is a binding site for a 1-acyl-sn-glycero-3-phosphate. Topologically, residues 226–255 (AHIFGYVRQRTMRMSRHSSGPRRNRDTMMS) are cytoplasmic. Residues 256–280 (LLKTVVIVLGAFIICWTPGLVLLLL) traverse the membrane as a helical segment. At 281–294 (DVCCPQCDVLAYEK) the chain is on the extracellular side. The cysteines at positions 284 and 287 are disulfide-linked. A helical transmembrane segment spans residues 295 to 315 (FFLLLAEFNSAMNPIIYSYRD). Over 316–364 (KEMSATFRQILCCQRSENTSGPTEGSDRSASSLNHTILAGVHSNDHSVV) the chain is Cytoplasmic. Position 341 is a phosphoserine (S341). Residue T351 is modified to Phosphothreonine.

Belongs to the G-protein coupled receptor 1 family. In terms of assembly, interacts with RALA and GRK2. Interacts with GNAQ and GNA13. Interacts with CD14; the interaction is enhanced by exposure to bacterial lipopolysaccharide (LPS). N-glycosylated.

The protein localises to the cell surface. It localises to the cell membrane. The protein resides in the endosome. Its function is as follows. Receptor for lysophosphatidic acid (LPA). Plays a role in the reorganization of the actin cytoskeleton, cell migration, differentiation and proliferation, and thereby contributes to the responses to tissue damage and infectious agents. Activates downstream signaling cascades via the G(i)/G(o), G(12)/G(13), and G(q) families of heteromeric G proteins. Signaling inhibits adenylyl cyclase activity and decreases cellular cAMP levels. Signaling triggers an increase of cytoplasmic Ca(2+) levels. Activates RALA; this leads to the activation of phospholipase C (PLC) and the formation of inositol 1,4,5-trisphosphate. Signaling mediates activation of down-stream MAP kinases. Contributes to the regulation of cell shape. Promotes Rho-dependent reorganization of the actin cytoskeleton in neuronal cells and neurite retraction. Promotes the activation of Rho and the formation of actin stress fibers. Promotes formation of lamellipodia at the leading edge of migrating cells via activation of RAC1. Through its function as LPA receptor, plays a role in chemotaxis and cell migration, including responses to injury and wounding. Plays a role in triggering inflammation in response to bacterial lipopolysaccharide (LPS) via its interaction with CD14. Promotes cell proliferation in response to LPA. Inhibits the intracellular ciliogenesis pathway in response to LPA and through AKT1 activation. Required for normal skeleton development. May play a role in osteoblast differentiation. Required for normal brain development. Required for normal proliferation, survival and maturation of newly formed neurons in the adult dentate gyrus. Plays a role in pain perception and in the initiation of neuropathic pain. The protein is Lysophosphatidic acid receptor 1 (LPAR1) of Bos taurus (Bovine).